Consider the following 713-residue polypeptide: Polyribonucleotide nucleotidyltransferase (713 aa).

Mg(2+)-binding residues include Asp-485 and Asp-491. The region spanning Pro-552–Ile-611 is the KH domain. Residues Asn-621–Lys-689 form the S1 motif domain.

It belongs to the polyribonucleotide nucleotidyltransferase family. As to quaternary structure, component of the RNA degradosome, which is a multiprotein complex involved in RNA processing and mRNA degradation. The cofactor is Mg(2+).

The protein localises to the cytoplasm. The catalysed reaction is RNA(n+1) + phosphate = RNA(n) + a ribonucleoside 5'-diphosphate. In terms of biological role, involved in mRNA degradation. Catalyzes the phosphorolysis of single-stranded polyribonucleotides processively in the 3'- to 5'-direction. This chain is Polyribonucleotide nucleotidyltransferase, found in Aeromonas salmonicida (strain A449).